A 187-amino-acid polypeptide reads, in one-letter code: Ribosome-recycling factor (187 aa).

This sequence belongs to the RRF family.

It localises to the cytoplasm. Its function is as follows. Responsible for the release of ribosomes from messenger RNA at the termination of protein biosynthesis. May increase the efficiency of translation by recycling ribosomes from one round of translation to another. The chain is Ribosome-recycling factor from Petrotoga mobilis (strain DSM 10674 / SJ95).